Here is a 198-residue protein sequence, read N- to C-terminus: uncharacterized protein (198 aa).

The tract at residues 166 to 198 (GYEPDEKARKKRERVKRSEVEDQLKINVKPTRR) is disordered.

This is an uncharacterized protein from Coxiella burnetii (strain RSA 493 / Nine Mile phase I).